Here is a 57-residue protein sequence, read N- to C-terminus: uncharacterized protein (57 aa).

The segment at 1-57 is disordered; that stretch reads MDDTLPKQMTPTDTSPLKEEQAHCNNKTLENQPKNINDNKCTDSQNTDLQNTEPSKV. A compositionally biased stretch (polar residues) spans 23 to 57; the sequence is HCNNKTLENQPKNINDNKCTDSQNTDLQNTEPSKV.

This is an uncharacterized protein from Ornithodoros (relapsing fever ticks).